We begin with the raw amino-acid sequence, 841 residues long: Toll-like receptor 4 (841 aa).

The signal sequence occupies residues 1–23; it reads MMARARLAAALIPATAILSCLRT. The Extracellular segment spans residues 24–632; the sequence is ESWDPCVQVV…FRNATCQLSK (609 aa). An intrachain disulfide couples C29 to C40. N-linked (GlcNAc...) asparagine glycosylation is found at N35 and N73. LRR repeat units lie at residues 55-76, 79-100, 103-124, 127-148, 151-172, 176-197, and 205-225; these read STKM…NFSS, ELQV…TFQG, HLST…AFSG, SLQK…PIGH, NLKE…EYFS, NLEH…DVKV, and NLSL…TFKE. N-linked (GlcNAc...) asparagine glycans are attached at residues N205, N238, N282, and N309. A disulfide bridge links C281 with C306. LRR repeat units follow at residues 352 to 373, 374 to 394, 400 to 422, 423 to 444, 448 to 469, 472 to 495, 497 to 518, 521 to 542, and 545 to 568; these read SLKK…FQLP, SLQY…CSHT, NLKH…MGLE, QLEH…SAFL, NLRY…IFTG, SLQT…FTEL, NLTV…AFHS, SLQV…LYEP, and SLRI…QNLP. A disulfide bridge connects residues C390 and C391. Residues N497 and N526 are each glycosylated (N-linked (GlcNAc...) asparagine). A glycan (N-linked (GlcNAc...) asparagine) is linked at N575. An LRRCT domain is found at 579-630; it reads NAFACVCEHQSFLQWVKDQRQLLVGAEQMMCAEPLDMEDMPVLSFRNATCQL. Intrachain disulfides connect C583–C609 and C585–C628. N-linked (GlcNAc...) asparagine glycosylation occurs at N625. A helical transmembrane segment spans residues 633 to 653; sequence TIISVSVVTVLLVSVVGVLVY. The Cytoplasmic segment spans residues 654 to 841; that stretch reads KFYFHLMLLA…TNPQEATTST (188 aa). Residues 673–816 enclose the TIR domain; the sequence is SIYDAFVIYS…VFWRRLRKAL (144 aa). The tract at residues 820–841 is disordered; the sequence is KPQSPEGTADAETNPQEATTST. Over residues 830–841 the composition is skewed to polar residues; that stretch reads AETNPQEATTST.

The protein belongs to the Toll-like receptor family. In terms of assembly, belongs to the lipopolysaccharide (LPS) receptor, a multi-protein complex containing at least CD14, LY96 and TLR4. Binding to bacterial LPS leads to homodimerization. Interacts with LY96 via the extracellular domain. Interacts with MYD88 and TIRAP via their respective TIR domains. Interacts with TICAM2. Interacts with NOX4. Interacts with CNPY3 and HSP90B1; this interaction is required for proper folding in the endoplasmic reticulum. Interacts with MAP3K21; this interaction leads to negative regulation of TLR4 signaling. Interacts with CD36, following CD36 stimulation by oxLDL or amyloid-beta 42, and forms a heterodimer with TLR6. The trimeric complex is internalized and triggers inflammatory response. LYN kinase activity facilitates TLR4-TLR6 heterodimerization and signal initiation. Interacts with TICAM1 in response to LPS in a WDFY1-dependent manner. Interacts with WDFY1 in response to LPS. Interacts with SMPDL3B. Interacts with CEACAM1; upon lipopolysaccharide stimulation, forms a complex including TLR4 and the phosphorylated form of SYK and CEACAM1, which in turn, recruits PTPN6 that dephosphorylates SYK, reducing the production of reactive oxygen species (ROS) and lysosome disruption, which in turn, reduces the activity of the inflammasome. Interacts with RFTN1; the interaction occurs in response to lipopolysaccharide stimulation. Interacts with SCIMP; the interaction occurs in response to lipopolysaccharide stimulation and is enhanced by phosphorylation of SCIMP by LYN. This interaction facilitates the phosphorylation of TLR4 by LYN which elicits a selective cytokine response in macrophages. Interacts with TRAF3IP3. Interacts with TREM1; this interaction enhances TLR4-mediated inflammatory response. Interacts with ZG16B/PAUF. Interacts with CD82; this interaction inhibits TLR4-mediated signaling pathway. Phosphorylated on tyrosine residues by LYN after binding lipopolysaccharide. In terms of processing, ubiquitinated by RNF128 via 'Lys-28'-linked polyubiquitin chains, leading to proteasomal degradation.

It localises to the cell membrane. It is found in the early endosome. The protein resides in the cell projection. Its subcellular location is the ruffle. Its function is as follows. Transmembrane receptor that functions as a pattern recognition receptor recognizing pathogen- and damage-associated molecular patterns (PAMPs and DAMPs) to induce innate immune responses via downstream signaling pathways. At the plasma membrane, cooperates with LY96 to mediate the innate immune response to bacterial lipopolysaccharide (LPS). Also involved in LPS-independent inflammatory responses triggered by free fatty acids, such as palmitate, and Ni(2+). Mechanistically, acts via MYD88, TIRAP and TRAF6, leading to NF-kappa-B activation, cytokine secretion and the inflammatory response. Alternatively, CD14-mediated TLR4 internalization via endocytosis is associated with the initiation of a MYD88-independent signaling via the TICAM1-TBK1-IRF3 axis leading to type I interferon production. In addition to the secretion of proinflammatory cytokines, initiates the activation of NLRP3 inflammasome and formation of a positive feedback loop between autophagy and NF-kappa-B signaling cascade. In complex with TLR6, promotes inflammation in monocytes/macrophages by associating with TLR6 and the receptor CD86. Upon ligand binding, such as oxLDL or amyloid-beta 42, the TLR4:TLR6 complex is internalized and triggers inflammatory response, leading to NF-kappa-B-dependent production of CXCL1, CXCL2 and CCL9 cytokines, via MYD88 signaling pathway, and CCL5 cytokine, via TICAM1 signaling pathway. In myeloid dendritic cells, vesicular stomatitis virus glycoprotein G but not LPS promotes the activation of IRF7, leading to type I IFN production in a CD14-dependent manner. The chain is Toll-like receptor 4 (TLR4) from Bos taurus (Bovine).